Here is an 823-residue protein sequence, read N- to C-terminus: Adhesion G protein-coupled receptor E2 (823 aa).

Residues 1–23 form the signal peptide; sequence MGGRVFLVFLAFCVWLTLPGAET. Residues 24 to 540 lie on the Extracellular side of the membrane; it reads QDSRGCARWC…EEDPVLTVIT (517 aa). The EGF-like 1 domain occupies 25 to 66; sequence DSRGCARWCPQDSSCVNATACRCNPGFSSFSEIITTPMETCD. Disulfide bonds link Cys-29/Cys-39, Cys-33/Cys-45, Cys-47/Cys-65, Cys-71/Cys-85, Cys-79/Cys-94, Cys-96/Cys-117, Cys-123/Cys-136, Cys-130/Cys-145, Cys-147/Cys-161, Cys-167/Cys-180, Cys-174/Cys-189, Cys-191/Cys-210, Cys-216/Cys-229, Cys-223/Cys-238, and Cys-240/Cys-259. N-linked (GlcNAc...) asparagine glycosylation occurs at Asn-41. The EGF-like 2; calcium-binding domain occupies 67 to 118; the sequence is DINECATLSKVSCGKFSDCWNTEGSYDCVCSPGYEPVSGAKTFKNESENTCQ. Asn-111 carries N-linked (GlcNAc...) asparagine glycosylation. In terms of domain architecture, EGF-like 3; calcium-binding spans 119 to 162; that stretch reads DVDECQQNPRLCKSYGTCVNTLGSYTCQCLPGFKLKPEDPKLCT. An EGF-like 4; calcium-binding domain is found at 163 to 211; it reads DVNECTSGQNPCHSSTHCLNNVGSYQCRCRPGWQPIPGSPNGPNNTVCE. A glycan (N-linked (GlcNAc...) asparagine) is linked at Asn-206. One can recognise an EGF-like 5; calcium-binding domain in the interval 212 to 260; sequence DVDECSSGQHQCDSSTVCFNTVGSYSCRCRPGWKPRHGIPNNQKDTVCE. N-linked (GlcNAc...) asparagine glycans are attached at residues Asn-298, Asn-347, Asn-354, Asn-456, and Asn-460. One can recognise a GAIN-B domain in the interval 354–530; the sequence is NFSYPAGTEL…AVLMAHYDVQ (177 aa). 2 disulfide bridges follow: Cys-482-Cys-512 and Cys-500-Cys-514. Positions 482 to 530 are GPS; the sequence is CVFWEHGQNGCGHWATTGCSTIGTRDTSTICRCTHLSSFAVLMAHYDVQ. Residues 541–561 form a helical membrane-spanning segment; it reads YMGLSVSLLCLLLAALTFLLC. At 562–569 the chain is on the cytoplasmic side; that stretch reads KAIQNTST. The helical transmembrane segment at 570–590 threads the bilayer; sequence SLHLQLSLCLFLAHLLFLVAI. The Extracellular segment spans residues 591-605; the sequence is DQTGHKVLCSIIAGT. A helical transmembrane segment spans residues 606–626; it reads LHYLYLATLTWMLLEALYLFL. The Cytoplasmic portion of the chain corresponds to 627 to 644; the sequence is TARNLTVVNYSSINRFMK. Residues 645 to 665 form a helical membrane-spanning segment; sequence KLMFPVGYGVPAVTVAISAAS. Residues 666–683 lie on the Extracellular side of the membrane; sequence RPHLYGTPSRCWLQPEKG. Residues 684 to 704 form a helical membrane-spanning segment; that stretch reads FIWGFLGPVCAIFSVNLVLFL. At 705–735 the chain is on the cytoplasmic side; sequence VTLWILKNRLSSLNSEVSTLRNTRMLAFKAT. The chain crosses the membrane as a helical span at residues 736 to 756; sequence AQLFILGCTWCLGILQVGPAA. Over 757 to 760 the chain is Extracellular; sequence RVMA. The chain crosses the membrane as a helical span at residues 761 to 781; sequence YLFTIINSLQGVFIFLVYCLL. At 782-823 the chain is on the cytoplasmic side; sequence SQQVREQYGKWSKGIRKLKTESEMHTLSSSAKADTSKPSTVN.

This sequence belongs to the G-protein coupled receptor 2 family. Adhesion G-protein coupled receptor (ADGR) subfamily. As to quaternary structure, forms a heterodimer, consisting of a large extracellular region non-covalently linked to a seven-transmembrane moiety. Interacts with chondroitin sulfate; the interaction with chondroitin sulfate is calcium-dependent. Interacts with CD55. Autoproteolytically cleaved into 2 subunits, an extracellular alpha subunit and a seven-transmembrane beta subunit. Expression is restricted to myeloid cells. Highest expression was found in peripheral blood leukocytes, followed by spleen and lymph nodes, with intermediate to low levels in thymus, bone marrow, fetal liver, placenta, and lung, and no expression in heart, brain, skeletal muscle, kidney, or pancreas. Expression is also detected in monocyte/macrophage and Jurkat cell lines but not in other cell lines tested. High expression in mast cells.

It is found in the cell membrane. Its subcellular location is the cell projection. The protein localises to the ruffle membrane. Functionally, cell surface receptor that binds to the chondroitin sulfate moiety of glycosaminoglycan chains and promotes cell attachment. Promotes granulocyte chemotaxis, degranulation and adhesion. In macrophages, promotes the release of inflammatory cytokines, including IL8 and TNF. Signals probably through G-proteins. Is a regulator of mast cell degranulation. The chain is Adhesion G protein-coupled receptor E2 from Homo sapiens (Human).